The following is a 439-amino-acid chain: ATP-dependent DNA helicase dda (439 aa).

Residue 32-39 participates in ATP binding; that stretch reads GPAGTGKT.

Monomer. Interacts with UvsX and gene 32 protein.

The enzyme catalyses Couples ATP hydrolysis with the unwinding of duplex DNA at the replication fork by translocating in the 5'-3' direction. This creates two antiparallel DNA single strands (ssDNA). The leading ssDNA polymer is the template for DNA polymerase III holoenzyme which synthesizes a continuous strand.. It carries out the reaction ATP + H2O = ADP + phosphate + H(+). Functionally, DNA helicase that stimulates viral DNA replication and recombination. Plays a role in T4 DNA replication initiation by selecting and activating DNA origins. Acts by dissociating and reassociating with the DNA molecule being unwound. Unwinds DNA as a monomer in a 5'-3' direction at a rate of 250 bp/s and can efficiently displace proteins from the DNA. The sequence is that of ATP-dependent DNA helicase dda (dda) from Enterobacteria phage T4 (Bacteriophage T4).